We begin with the raw amino-acid sequence, 174 residues long: Probable inosine/xanthosine triphosphatase (174 aa).

Position 63 (aspartate 63) interacts with Mg(2+).

This sequence belongs to the YjjX NTPase family. In terms of assembly, homodimer. The cofactor is Mg(2+). It depends on Mn(2+) as a cofactor.

It catalyses the reaction XTP + H2O = XDP + phosphate + H(+). The enzyme catalyses ITP + H2O = IDP + phosphate + H(+). In terms of biological role, phosphatase that hydrolyzes non-canonical purine nucleotides such as XTP and ITP to their respective diphosphate derivatives. Probably excludes non-canonical purines from DNA/RNA precursor pool, thus preventing their incorporation into DNA/RNA and avoiding chromosomal lesions. The chain is Probable inosine/xanthosine triphosphatase from Methanocella arvoryzae (strain DSM 22066 / NBRC 105507 / MRE50).